Reading from the N-terminus, the 405-residue chain is Alpha-N-acetylgalactosaminidase (405 aa).

3 cysteine pairs are disulfide-bonded: Cys21/Cys63, Cys25/Cys32, and Cys111/Cys142. Substrate contacts are provided by residues 61–62 and Lys138; that span reads DD. Asp140 (nucleophile) is an active-site residue. Asn161 carries N-linked (GlcNAc...) asparagine glycosylation. Cys171 and Cys193 are joined by a disulfide. Ser172 contacts substrate. Residue Asn185 is glycosylated (N-linked (GlcNAc...) asparagine). Substrate contacts are provided by Arg197 and Asp201. Asp201 (proton donor) is an active-site residue. A glycan (N-linked (GlcNAc...) asparagine) is linked at Asn369.

Belongs to the glycosyl hydrolase 27 family. Homodimer.

The protein resides in the lysosome. It catalyses the reaction Cleavage of non-reducing alpha-(1-&gt;3)-N-acetylgalactosamine residues from human blood group A and AB mucin glycoproteins, Forssman hapten and blood group A lacto series glycolipids.. It carries out the reaction a neolactoside IV(3)-alpha-GalNAc,IV(2)-alpha-Fuc-nLc4Cer(d18:1(4E)) + H2O = a neolactoside IV(2)-alpha-Fuc-nLc4Cer(d18:1(4E)) + N-acetyl-alpha-D-galactosamine. The enzyme catalyses a neolactoside IV(3)-alpha-GalNAc,IV(2)-alpha-Fuc-nLc4Cer(d18:0) + H2O = a neolactoside IV(2)-alpha-Fuc-nLc4Cer(d18:0) + N-acetyl-alpha-D-galactosamine. The catalysed reaction is a globoside IV3GalNAc-Gb4Cer + H2O = N-acetyl-alpha-D-galactosamine + a globoside Gb4Cer. Functionally, removes terminal alpha-N-acetylgalactosamine residues from glycolipids and glycopeptides. Required for the breakdown of glycolipids. The sequence is that of Alpha-N-acetylgalactosaminidase (NAGA) from Gallus gallus (Chicken).